The primary structure comprises 320 residues: MHGQALIDRLGDRLAGLRGRLTPNAEMDKITWFRAGGLAEVFFQPADEEDLAAFLRAVPEEIPLTIVGVGSNLLVRDGGIPGFVIRLSAKGFGEAEIVSPIRIKAGAATPDKRVAALALEAGIGGFHFYHGIPGAIGGALRMNAGANGVETRERVVEVRALDRKGNVQTMSNAEMGYAYRHSAAPVGLIFTSAVFEGFAEDKATIKAAMDAVQNHRETVQPIREKTGGSTFKNPEGTSAWKEIDKAGCRGLMIGGAQMSPMHCNFMINTGTATGYDLEYLGETVRARVLEHSGIRLQWEIKRIGNFRPGHAVQEFLGQLL.

Positions 34-200 (RAGGLAEVFF…TSAVFEGFAE (167 aa)) constitute an FAD-binding PCMH-type domain. Arg180 is a catalytic residue. Ser229 functions as the Proton donor in the catalytic mechanism. Glu299 is an active-site residue.

This sequence belongs to the MurB family. The cofactor is FAD.

The protein resides in the cytoplasm. It carries out the reaction UDP-N-acetyl-alpha-D-muramate + NADP(+) = UDP-N-acetyl-3-O-(1-carboxyvinyl)-alpha-D-glucosamine + NADPH + H(+). It participates in cell wall biogenesis; peptidoglycan biosynthesis. Its function is as follows. Cell wall formation. This chain is UDP-N-acetylenolpyruvoylglucosamine reductase, found in Mesorhizobium japonicum (strain LMG 29417 / CECT 9101 / MAFF 303099) (Mesorhizobium loti (strain MAFF 303099)).